Reading from the N-terminus, the 241-residue chain is Probable transcriptional regulatory protein CV_3123 (241 aa).

This sequence belongs to the TACO1 family.

It is found in the cytoplasm. The polypeptide is Probable transcriptional regulatory protein CV_3123 (Chromobacterium violaceum (strain ATCC 12472 / DSM 30191 / JCM 1249 / CCUG 213 / NBRC 12614 / NCIMB 9131 / NCTC 9757 / MK)).